A 128-amino-acid chain; its full sequence is Small ribosomal subunit protein uS11m (128 aa).

The protein belongs to the universal ribosomal protein uS11 family.

The protein resides in the mitochondrion. The polypeptide is Small ribosomal subunit protein uS11m (RPS11) (Prototheca wickerhamii).